Here is a 285-residue protein sequence, read N- to C-terminus: Ribosomal RNA small subunit methyltransferase I (285 aa).

Belongs to the methyltransferase superfamily. RsmI family.

Its subcellular location is the cytoplasm. The enzyme catalyses cytidine(1402) in 16S rRNA + S-adenosyl-L-methionine = 2'-O-methylcytidine(1402) in 16S rRNA + S-adenosyl-L-homocysteine + H(+). Its function is as follows. Catalyzes the 2'-O-methylation of the ribose of cytidine 1402 (C1402) in 16S rRNA. This Mycobacterium tuberculosis (strain ATCC 25618 / H37Rv) protein is Ribosomal RNA small subunit methyltransferase I.